A 398-amino-acid polypeptide reads, in one-letter code: Carbamoyl phosphate synthase small chain (398 aa).

CPSase regions lie at residues 1-205 (MTQT…TNDA) and 1-207 (MTQT…DACN). Serine 60, glycine 257, and glycine 259 together coordinate L-glutamine. Positions 209–397 (HIVAIDYGIK…FNLIMDYKRT (189 aa)) constitute a Glutamine amidotransferase type-1 domain. The Nucleophile role is filled by cysteine 286. Residues leucine 287, glutamine 290, asparagine 328, glycine 330, and phenylalanine 331 each contribute to the L-glutamine site. Active-site residues include histidine 370 and glutamate 372.

It belongs to the CarA family. As to quaternary structure, composed of two chains; the small (or glutamine) chain promotes the hydrolysis of glutamine to ammonia, which is used by the large (or ammonia) chain to synthesize carbamoyl phosphate. Tetramer of heterodimers (alpha,beta)4.

It catalyses the reaction hydrogencarbonate + L-glutamine + 2 ATP + H2O = carbamoyl phosphate + L-glutamate + 2 ADP + phosphate + 2 H(+). It carries out the reaction L-glutamine + H2O = L-glutamate + NH4(+). The protein operates within amino-acid biosynthesis; L-arginine biosynthesis; carbamoyl phosphate from bicarbonate: step 1/1. Its pathway is pyrimidine metabolism; UMP biosynthesis via de novo pathway; (S)-dihydroorotate from bicarbonate: step 1/3. Small subunit of the glutamine-dependent carbamoyl phosphate synthetase (CPSase). CPSase catalyzes the formation of carbamoyl phosphate from the ammonia moiety of glutamine, carbonate, and phosphate donated by ATP, constituting the first step of 2 biosynthetic pathways, one leading to arginine and/or urea and the other to pyrimidine nucleotides. The small subunit (glutamine amidotransferase) binds and cleaves glutamine to supply the large subunit with the substrate ammonia. This chain is Carbamoyl phosphate synthase small chain, found in Bartonella quintana (strain Toulouse) (Rochalimaea quintana).